A 256-amino-acid chain; its full sequence is uncharacterized protein (256 aa).

ATP is bound at residue 29 to 36 (GDDHSGKT).

This is an uncharacterized protein from Saccharomyces cerevisiae (strain ATCC 204508 / S288c) (Baker's yeast).